The sequence spans 96 residues: Protein Vpr (96 aa).

The homooligomerization stretch occupies residues 1 to 42 (MEQAPEDQGPQREPYNEWTLELLEELKNEAVRHFPRIWLHSL). A phosphoserine; by host mark is found at Ser79, Ser94, and Ser96.

This sequence belongs to the HIV-1 VPR protein family. Homooligomer, may form homodimer. Interacts with p6-gag region of the Pr55 Gag precursor protein through a (Leu-X-X)4 motif near the C-terminus of the P6gag protein. Interacts with host UNG. May interact with host RAD23A/HHR23A. Interacts with host VPRBP/DCAF1, leading to hijack the CUL4A-RBX1-DDB1-DCAF1/VPRBP complex, mediating ubiquitination of host proteins such as TERT and ZGPAT and arrest of the cell cycle in G2 phase. Phosphorylated on several residues by host. These phosphorylations regulate VPR activity for the nuclear import of the HIV-1 pre-integration complex.

Its subcellular location is the virion. The protein localises to the host nucleus. It is found in the host extracellular space. Its function is as follows. During virus replication, may deplete host UNG protein, and incude G2-M cell cycle arrest. Acts by targeting specific host proteins for degradation by the 26S proteasome, through association with the cellular CUL4A-DDB1 E3 ligase complex by direct interaction with host VPRPB/DCAF-1. Cell cycle arrest reportedly occurs within hours of infection and is not blocked by antiviral agents, suggesting that it is initiated by the VPR carried into the virion. Additionally, VPR induces apoptosis in a cell cycle dependent manner suggesting that these two effects are mechanistically linked. Detected in the serum and cerebrospinal fluid of AIDS patient, VPR may also induce cell death to bystander cells. Functionally, during virus entry, plays a role in the transport of the viral pre-integration (PIC) complex to the host nucleus. This function is crucial for viral infection of non-dividing macrophages. May act directly at the nuclear pore complex, by binding nucleoporins phenylalanine-glycine (FG)-repeat regions. This Homo sapiens (Human) protein is Protein Vpr.